The sequence spans 256 residues: Ribonuclease 3 (256 aa).

One can recognise an RNase III domain in the interval 3–125 (LEALQQRLGY…IFGAVFLDGG (123 aa)). Residue E38 participates in Mg(2+) binding. D42 is a catalytic residue. Residues D111 and E114 each coordinate Mg(2+). The active site involves E114. Residues 152–222 (DAKTLLQEYL…AKLALEEAHR (71 aa)) form the DRBM domain. Positions 227–256 (LVKRSRAERTGKTRKQATPPDPQLSLRLKE) are disordered.

This sequence belongs to the ribonuclease III family. In terms of assembly, homodimer. Requires Mg(2+) as cofactor.

Its subcellular location is the cytoplasm. It carries out the reaction Endonucleolytic cleavage to 5'-phosphomonoester.. Digests double-stranded RNA. Involved in the processing of primary rRNA transcript to yield the immediate precursors to the large and small rRNAs (23S and 16S). Processes some mRNAs, and tRNAs when they are encoded in the rRNA operon. Processes pre-crRNA and tracrRNA of type II CRISPR loci if present in the organism. This chain is Ribonuclease 3, found in Ralstonia nicotianae (strain ATCC BAA-1114 / GMI1000) (Ralstonia solanacearum).